The primary structure comprises 356 residues: MDLEAKEISGNIPNENALAELCRLCESADLSQIENFVGRYKNWCLSIIWPRNCWLRFTPRKDVAGYTEKMFEDMDDHYQGFVEKLCLLGTIQIPYRDVPILIGRSKRIFLHDLETDTLHFVCDNFEQFVRYGVLGTNIITCAEPVYRHGLYEGPRFESLENLMNNDVLRSPYTLNVHVKLNRKGVLGIKAMRKHYIAMLREFDELARCASLDDVGRFVSLNVGRDLRLDMPVFKSLTLGTRDSVWTGTCRLANLKEQEDLVEKVVVLGYLNDHDYESKCTRPILCIGKSGKIYYYDWIDNVLVKLGDCLLTFLRVGFARLFADYGYEKIGKISMRFGRMSTLGMSETYQSCMSLSK.

The protein belongs to the herpesviridae US22 family.

In Homo sapiens (Human), this protein is Protein U8 (U8).